We begin with the raw amino-acid sequence, 374 residues long: Ribosomal RNA large subunit methyltransferase G (374 aa).

It belongs to the methyltransferase superfamily. RlmG family.

The protein localises to the cytoplasm. The catalysed reaction is guanosine(1835) in 23S rRNA + S-adenosyl-L-methionine = N(2)-methylguanosine(1835) in 23S rRNA + S-adenosyl-L-homocysteine + H(+). Its function is as follows. Specifically methylates the guanine in position 1835 (m2G1835) of 23S rRNA. In Pseudomonas fluorescens (strain Pf0-1), this protein is Ribosomal RNA large subunit methyltransferase G.